Here is a 258-residue protein sequence, read N- to C-terminus: Imidazole glycerol phosphate synthase subunit HisF (258 aa).

Residues Asp11 and Asp130 contribute to the active site.

Belongs to the HisA/HisF family. As to quaternary structure, heterodimer of HisH and HisF.

The protein resides in the cytoplasm. The enzyme catalyses 5-[(5-phospho-1-deoxy-D-ribulos-1-ylimino)methylamino]-1-(5-phospho-beta-D-ribosyl)imidazole-4-carboxamide + L-glutamine = D-erythro-1-(imidazol-4-yl)glycerol 3-phosphate + 5-amino-1-(5-phospho-beta-D-ribosyl)imidazole-4-carboxamide + L-glutamate + H(+). Its pathway is amino-acid biosynthesis; L-histidine biosynthesis; L-histidine from 5-phospho-alpha-D-ribose 1-diphosphate: step 5/9. Its function is as follows. IGPS catalyzes the conversion of PRFAR and glutamine to IGP, AICAR and glutamate. The HisF subunit catalyzes the cyclization activity that produces IGP and AICAR from PRFAR using the ammonia provided by the HisH subunit. This Synechococcus sp. (strain CC9902) protein is Imidazole glycerol phosphate synthase subunit HisF.